The sequence spans 128 residues: uncharacterized protein (128 aa).

The segment covering 1–11 has biased composition (basic and acidic residues); that stretch reads MDNKKKEENPS. Residues 1–40 are disordered; sequence MDNKKKEENPSKSDTSISLPPSSTGEALQNYTESEWNASD. The span at 12-37 shows a compositional bias: polar residues; that stretch reads KSDTSISLPPSSTGEALQNYTESEWN.

This is an uncharacterized protein from Caenorhabditis elegans.